Reading from the N-terminus, the 325-residue chain is Probable isoaspartyl peptidase/L-asparaginase 2 (325 aa).

Thr195 functions as the Nucleophile in the catalytic mechanism. Substrate contacts are provided by residues 223–226 (RIGD) and 245–248 (TGEG).

Belongs to the Ntn-hydrolase family. Heterotetramer of two alpha and two beta chains arranged as a dimer of alpha/beta heterodimers. Post-translationally, cleaved into an alpha and beta chain by autocatalysis; this activates the enzyme. The N-terminal residue of the beta subunit is responsible for the nucleophile hydrolase activity.

The enzyme catalyses Cleavage of a beta-linked Asp residue from the N-terminus of a polypeptide.. Acts in asparagine catabolism and also in the final steps of protein degradation via hydrolysis of a range of isoaspartyl dipeptides. This chain is Probable isoaspartyl peptidase/L-asparaginase 2, found in Arabidopsis thaliana (Mouse-ear cress).